Here is a 269-residue protein sequence, read N- to C-terminus: Ribonuclease HII (269 aa).

The region spanning 83–269 (YLIAGVDEVG…HRMSFLTNIL (187 aa)) is the RNase H type-2 domain. Residues Asp-89, Glu-90, and Asp-185 each coordinate a divalent metal cation.

The protein belongs to the RNase HII family. Mn(2+) serves as cofactor. Requires Mg(2+) as cofactor.

Its subcellular location is the cytoplasm. The enzyme catalyses Endonucleolytic cleavage to 5'-phosphomonoester.. Its function is as follows. Endonuclease that specifically degrades the RNA of RNA-DNA hybrids. The sequence is that of Ribonuclease HII from Clostridium botulinum (strain Langeland / NCTC 10281 / Type F).